Here is a 548-residue protein sequence, read N- to C-terminus: Esterase-5A (548 aa).

Positions 1–21 are cleaved as a signal peptide; it reads MHLVRWLICLIQLWVQLGAAG. A disulfide bridge connects residues cysteine 87 and cysteine 106. Asparagine 95 and asparagine 116 each carry an N-linked (GlcNAc...) asparagine glycan. Serine 210 serves as the catalytic Acyl-ester intermediate. Residues cysteine 262 and cysteine 274 are joined by a disulfide bond. Asparagine 479 is a glycosylation site (N-linked (GlcNAc...) asparagine). An intrachain disulfide couples cysteine 518 to cysteine 539.

Belongs to the type-B carboxylesterase/lipase family.

It is found in the secreted. The catalysed reaction is a carboxylic ester + H2O = an alcohol + a carboxylate + H(+). This Drosophila pseudoobscura pseudoobscura (Fruit fly) protein is Esterase-5A (Est-5A).